The chain runs to 552 residues: Hydroxylamine reductase (552 aa).

4 residues coordinate [2Fe-2S] cluster: Cys-3, Cys-6, Cys-18, and Cys-25. His-250, Glu-274, Cys-318, Cys-406, Cys-434, Cys-459, Glu-493, and Lys-495 together coordinate hybrid [4Fe-2O-2S] cluster. A Cysteine persulfide modification is found at Cys-406.

It belongs to the HCP family. It depends on [2Fe-2S] cluster as a cofactor. Requires hybrid [4Fe-2O-2S] cluster as cofactor.

The protein localises to the cytoplasm. The enzyme catalyses A + NH4(+) + H2O = hydroxylamine + AH2 + H(+). In terms of biological role, catalyzes the reduction of hydroxylamine to form NH(3) and H(2)O. This chain is Hydroxylamine reductase, found in Shewanella woodyi (strain ATCC 51908 / MS32).